Reading from the N-terminus, the 340-residue chain is GTPase Obg (340 aa).

Residues 1–159 (MKFLDQAKVY…RTLWLRLKLI (159 aa)) form the Obg domain. Residues 160-327 (ADAGIIGLPN…LLRAGAHIIE (168 aa)) enclose the OBG-type G domain. GTP is bound by residues 166-173 (GLPNAGKS), 191-195 (FTTLY), 212-215 (DIPG), 279-282 (SQID), and 308-310 (SAV). 2 residues coordinate Mg(2+): Ser-173 and Thr-193.

Belongs to the TRAFAC class OBG-HflX-like GTPase superfamily. OBG GTPase family. In terms of assembly, monomer. It depends on Mg(2+) as a cofactor.

The protein localises to the cytoplasm. An essential GTPase which binds GTP, GDP and possibly (p)ppGpp with moderate affinity, with high nucleotide exchange rates and a fairly low GTP hydrolysis rate. Plays a role in control of the cell cycle, stress response, ribosome biogenesis and in those bacteria that undergo differentiation, in morphogenesis control. This chain is GTPase Obg, found in Bartonella henselae (strain ATCC 49882 / DSM 28221 / CCUG 30454 / Houston 1) (Rochalimaea henselae).